The following is an 88-amino-acid chain: Putative transmembrane protein ORF24 (88 aa).

3 helical membrane passes run 16–36, 42–62, and 64–84; these read LNMGLALLLATIMVMILWAGM, AVFVIWALTSITLIFTFVTQF, and FIWFWVMVMLSLLLISIVASI.

It is found in the host membrane. This chain is Putative transmembrane protein ORF24, found in Haloarcula hispanica (His1V).